Reading from the N-terminus, the 261-residue chain is Type II restriction enzyme Sau96I (261 aa).

In terms of assembly, monomer.

The catalysed reaction is Endonucleolytic cleavage of DNA to give specific double-stranded fragments with terminal 5'-phosphates.. In terms of biological role, a P subtype restriction enzyme that recognizes the double-stranded sequence 5'-GGNCC-3' and cleaves after G-1. This is Type II restriction enzyme Sau96I from Staphylococcus aureus.